The following is a 268-amino-acid chain: M1-specific T cell receptor alpha chain (268 aa).

Positions 1–19 (MVLKFSVSILWIQLAWVST) are cleaved as a signal peptide. The Ig-like V-type domain occupies 20–107 (QLLEQSPQFL…QPGDTGLYLC (88 aa)). Residues 20–109 (QLLEQSPQFL…GDTGLYLCAG (90 aa)) are t cell receptor alpha variable 27. Residues N36 and N42 are each glycosylated (N-linked (GlcNAc...) asparagine). C41 and C107 are oxidised to a cystine. The CDR1 stretch occupies residues 45–49 (SVFSS). The interval 67-69 (VVT) is CDR2. Residues 107–118 (CAGGGSQGNLIF) are CDR3. The tract at residues 110 to 128 (GGSQGNLIFGKGTKLSVKP) is t cell receptor alpha joining 42. The segment at 129-268 (IQNPDPAVYQ…LLMTLRLWSS (140 aa)) is t cell receptor alpha constant. Residues 147-235 (KSVCLFTDFD…LVEKSFETDT (89 aa)) enclose the Ig-like C1-type domain. A disulfide bridge links C150 with C200. 4 N-linked (GlcNAc...) asparagine glycosylation sites follow: N160, N194, N205, and N241. A connecting peptide region spans residues 222-243 (CDVKLVEKSFETDTNLNFQNLS). The chain crosses the membrane as a helical span at residues 244–266 (VIGFRILLLKVAGFNLLMTLRLW). At 267–268 (SS) the chain is on the cytoplasmic side.

As to quaternary structure, disulfide-linked heterodimer with TRBV19*01J2S7*01C*02 beta chain. The TR primarily interacts via its CDR3-beta domain with M/matrix protein 1-derived peptide (GILGFVFTL) displayed by HLA-A*02.01 in a 'peg-notch' recognition mode. The alpha-beta TR associates with the transmembrane signaling CD3 coreceptor proteins to form the TR-CD3 (TCR). The assembly of alpha-beta TR heterodimers with CD3 occurs in the endoplasmic reticulum where a single alpha-beta TR heterodimer associates with one CD3D-CD3E heterodimer, one CD3G-CD3E heterodimer and one CD247 homodimer forming a stable octameric structure. CD3D-CD3E and CD3G-CD3E heterodimers preferentially associate with TR alpha and TR beta chains (via TM domain), respectively. The association of the CD247 homodimer is the last step of TCR assembly in the endoplasmic reticulum and is required for transport to the cell surface. Expressed in M/matrix protein 1-specific effector and memory CD8-positive T cells readily detectable in the peripheral blood, secondary lymphoid organs and lung (primary site of infection) of IAV infected individuals.

The protein resides in the cell membrane. The alpha chain of TRAV27*01J42*01C*01/TRBV19*01J2S7*01C*02 alpha-beta T cell receptor (TR) clonotype that is specific for HLA-A*02:01-restricted M/matrix protein 1 immunodominant epitope GILGFVFTL of influenza A virus (IAV). Classified as a public TR clonotype, it is preferentially selected in effector memory CD8-positive T cells among multiple HLA-A*02:01 carriers and confers long-lived immunity against IAV infection. Can cross-recognize sporadically emerging IAV variants by molecular mimicry, inducing immunity toward different influenza strains. Antigen recognition initiates TR-CD3 clustering on the cell surface and intracellular activation of LCK that phosphorylates the ITAM motifs of CD3G, CD3D, CD3E and CD247 enabling the recruitment of ZAP70. In turn, ZAP70 phosphorylates LAT, which recruits numerous signaling molecules to form the LAT signalosome. The LAT signalosome propagates signal branching to three major signaling pathways, the calcium, the mitogen-activated protein kinase (MAPK) kinase and the nuclear factor NF-kappa-B (NF-kB) pathways, leading to the mobilization of transcription factors that are critical for gene expression and essential for T cell differentiation into effector/memory T cells. This Homo sapiens (Human) protein is M1-specific T cell receptor alpha chain.